Consider the following 70-residue polypeptide: Large ribosomal subunit protein eL38 (70 aa).

It belongs to the eukaryotic ribosomal protein eL38 family.

The polypeptide is Large ribosomal subunit protein eL38 (RpL38) (Aedes aegypti (Yellowfever mosquito)).